The primary structure comprises 112 residues: Putative pterin-4-alpha-carbinolamine dehydratase (112 aa).

This sequence belongs to the pterin-4-alpha-carbinolamine dehydratase family.

The catalysed reaction is (4aS,6R)-4a-hydroxy-L-erythro-5,6,7,8-tetrahydrobiopterin = (6R)-L-erythro-6,7-dihydrobiopterin + H2O. The chain is Putative pterin-4-alpha-carbinolamine dehydratase from Vibrio campbellii (strain ATCC BAA-1116).